A 225-amino-acid polypeptide reads, in one-letter code: MDFAELLESKAFTRTRLPLSKPIVVHAVAGAGKTSLLENYARINPAARIYTPIAQQSNSLLLSPFTQSLEQADIVDEYPLSTLHPGVEYVLADPIQYLGSKDLLKPHYICPTTHRFGHSTAEFLTSLGIETYAHKPDRLTIANIFKTEPHGQVIACDLDTQQLAARHSLDYLRPCQSIGKTFKDTTILISHELNRDTLTKEIYIALTRHTNSVTILTPDAPSTSS.

In terms of domain architecture, (+)RNA virus helicase ATP-binding spans Met-1–Cys-110. One can recognise a (+)RNA virus helicase C-terminal domain in the interval Pro-111 to Ser-225.

Belongs to the Tymovirales TGBp1 protein family. Homodimer and homooligomer. Interacts with capsid protein. Interacts with host AGO1; this interaction targets the host protein for degradation, thereby suppressing the antiviral RNA silencing.

Its subcellular location is the host cytoplasm. Its function is as follows. Transports viral genome to neighboring plant cells directly through plasmosdesmata, without any budding. The movement protein allows efficient cell to cell propagation, by bypassing the host cell wall barrier. Increases plasmodesma size exclusion limit. Acts as a suppressor of RNA-mediated gene silencing, also known as post-transcriptional gene silencing (PTGS), a mechanism of plant viral defense that limits the accumulation of viral RNAs. The protein is Movement and silencing protein TGBp1 of Citrus (ICRSV).